The primary structure comprises 290 residues: Glycine--tRNA ligase alpha subunit (290 aa).

It belongs to the class-II aminoacyl-tRNA synthetase family. In terms of assembly, tetramer of two alpha and two beta subunits.

The protein resides in the cytoplasm. The catalysed reaction is tRNA(Gly) + glycine + ATP = glycyl-tRNA(Gly) + AMP + diphosphate. The protein is Glycine--tRNA ligase alpha subunit of Gloeobacter violaceus (strain ATCC 29082 / PCC 7421).